A 106-amino-acid polypeptide reads, in one-letter code: ATP-dependent Clp protease adapter protein ClpS (106 aa).

This sequence belongs to the ClpS family. In terms of assembly, binds to the N-terminal domain of the chaperone ClpA.

Functionally, involved in the modulation of the specificity of the ClpAP-mediated ATP-dependent protein degradation. The chain is ATP-dependent Clp protease adapter protein ClpS from Vibrio atlanticus (strain LGP32) (Vibrio splendidus (strain Mel32)).